The following is a 476-amino-acid chain: Adenosylhomocysteinase (476 aa).

Substrate contacts are provided by T61, D140, and E200. Residue 201–203 (TTT) participates in NAD(+) binding. The substrate site is built by K230 and D234. NAD(+)-binding positions include N235, 264 to 269 (GYGDVG), E287, N322, 343 to 345 (IGH), and N389.

This sequence belongs to the adenosylhomocysteinase family. The cofactor is NAD(+).

Its subcellular location is the cytoplasm. It carries out the reaction S-adenosyl-L-homocysteine + H2O = L-homocysteine + adenosine. It participates in amino-acid biosynthesis; L-homocysteine biosynthesis; L-homocysteine from S-adenosyl-L-homocysteine: step 1/1. May play a key role in the regulation of the intracellular concentration of adenosylhomocysteine. The sequence is that of Adenosylhomocysteinase from Acidovorax sp. (strain JS42).